Here is a 493-residue protein sequence, read N- to C-terminus: UDP-N-acetylmuramate--L-alanine ligase (493 aa).

126–132 (GTHGKTT) provides a ligand contact to ATP.

Belongs to the MurCDEF family.

It is found in the cytoplasm. The enzyme catalyses UDP-N-acetyl-alpha-D-muramate + L-alanine + ATP = UDP-N-acetyl-alpha-D-muramoyl-L-alanine + ADP + phosphate + H(+). It functions in the pathway cell wall biogenesis; peptidoglycan biosynthesis. Functionally, cell wall formation. This chain is UDP-N-acetylmuramate--L-alanine ligase, found in Hamiltonella defensa subsp. Acyrthosiphon pisum (strain 5AT).